We begin with the raw amino-acid sequence, 313 residues long: Uracil-DNA glycosylase (313 aa).

A compositionally biased stretch (polar residues) spans 1 to 12 (MIGQKTLYSFFS). Residues 1–25 (MIGQKTLYSFFSPSPARKRHAPSPE) are interaction with FAM72A. Residues 1–29 (MIGQKTLYSFFSPSPARKRHAPSPEPAVQ) are mitochondrial localization signal. The segment at 1–68 (MIGQKTLYSF…GTPPSSPLSA (68 aa)) is disordered. S12 and S14 each carry phosphoserine. The Important for nuclear sorting motif lies at 17–19 (RKR). S23 is subject to Phosphoserine. Residues 43–53 (AAAIPAKKAPA) are compositionally biased toward low complexity. Residue T60 is modified to Phosphothreonine. S64 carries the post-translational modification Phosphoserine. An interaction with RPA2 region spans residues 73-88 (RIQRNKAAALLRLAAR). A uracil-binding site is contributed by Q153. Catalysis depends on D154, which acts as the Proton acceptor. DsDNA is bound at residue H157. Residue F167 participates in uracil binding. Residue S178 coordinates dsDNA. N213 contacts uracil. DsDNA-binding residues include S256, H277, S279, S282, and R285. H277 serves as a coordination point for uracil. Residue K295 is modified to N6-acetyllysine.

The protein belongs to the uracil-DNA glycosylase (UDG) superfamily. UNG family. Monomer. In terms of assembly, interacts with RPA2 subunit of the RPA trimer; this interaction mediates UNG2 recruitment to RPA-coated single-stranded DNA at stalled replication forks. Interacts with PCNA; this interaction mediates UNG2 recruitment to S-phase replication foci. Interacts (via N-terminus) with FAM72A. As to quaternary structure, (Microbial infection) Interacts with HIV-1 Vpr. In terms of processing, processed by mitochondrial serine or cysteine peptidases to yield a mature dominant form that lacks N-terminal 29 amino acid residues and another minor form that lacks N-terminal 77 amino acid residues. The catalytic activity of UNG1 delta29 is not product-inhibited by AP sites.

It localises to the mitochondrion. The protein resides in the nucleus. The catalysed reaction is Hydrolyzes single-stranded DNA or mismatched double-stranded DNA and polynucleotides, releasing free uracil.. The enzyme catalyses a 2'-deoxyuridine in single-stranded DNA + H2O = a 2'-deoxyribose 5'-monophosphate in single-stranded DNA + uracil. It carries out the reaction a 2'-deoxyuridine in double-stranded DNA + H2O = a 2'-deoxyribose 5'-monophosphate in double-stranded DNA + uracil. Functionally, uracil-DNA glycosylase that hydrolyzes the N-glycosidic bond between uracil and deoxyribose in single- and double-stranded DNA (ssDNA and dsDNA) to release a free uracil residue and form an abasic (apurinic/apyrimidinic; AP) site. Excises uracil residues arising as a result of misincorporation of dUMP residues by DNA polymerase during replication or due to spontaneous or enzymatic deamination of cytosine. Mediates error-free base excision repair (BER) of uracil at replication forks. According to the model, it is recruited by PCNA to S-phase replication forks to remove misincorporated uracil at U:A base mispairs in nascent DNA strands. Via trimeric RPA it is recruited to ssDNA stretches ahead of the polymerase to allow detection and excision of deaminated cytosines prior to replication. The resultant AP sites temporarily stall replication, allowing time to repair the lesion. Mediates mutagenic uracil processing involved in antibody affinity maturation. Processes AICDA-induced U:G base mispairs at variable immunoglobulin (Ig) regions leading to the generation of transversion mutations. Operates at switch sites of Ig constant regions where it mediates Ig isotype class switch recombination. Excises AICDA-induced uracil residues forming AP sites that are subsequently nicked by APEX1 endonuclease. The accumulation of staggered nicks in opposite strands results in double strand DNA breaks that are finally resolved via non-homologous end joining repair pathway. This chain is Uracil-DNA glycosylase, found in Homo sapiens (Human).